A 243-amino-acid chain; its full sequence is Segregation and condensation protein A (243 aa).

This sequence belongs to the ScpA family. As to quaternary structure, component of a cohesin-like complex composed of ScpA, ScpB and the Smc homodimer, in which ScpA and ScpB bind to the head domain of Smc. The presence of the three proteins is required for the association of the complex with DNA.

The protein resides in the cytoplasm. Its function is as follows. Participates in chromosomal partition during cell division. May act via the formation of a condensin-like complex containing Smc and ScpB that pull DNA away from mid-cell into both cell halves. The polypeptide is Segregation and condensation protein A (Staphylococcus aureus (strain NCTC 8325 / PS 47)).